Here is a 352-residue protein sequence, read N- to C-terminus: Glycerol-1-phosphate dehydrogenase [NAD(P)+] (352 aa).

NAD(+) contacts are provided by residues 99 to 103 and 121 to 124; these read GAKID and TAPS. Asp126 lines the substrate pocket. Residue Ser130 coordinates NAD(+). Asp173 lines the substrate pocket. 2 residues coordinate Zn(2+): Asp173 and His253. His257 contacts substrate. Residue His269 coordinates Zn(2+).

It belongs to the glycerol-1-phosphate dehydrogenase family. Requires Zn(2+) as cofactor.

The protein resides in the cytoplasm. The enzyme catalyses sn-glycerol 1-phosphate + NAD(+) = dihydroxyacetone phosphate + NADH + H(+). It catalyses the reaction sn-glycerol 1-phosphate + NADP(+) = dihydroxyacetone phosphate + NADPH + H(+). The protein operates within membrane lipid metabolism; glycerophospholipid metabolism. In terms of biological role, catalyzes the NAD(P)H-dependent reduction of dihydroxyacetonephosphate (DHAP or glycerone phosphate) to glycerol 1-phosphate (G1P). The G1P thus generated is used as the glycerophosphate backbone of phospholipids in the cellular membranes of Archaea. The polypeptide is Glycerol-1-phosphate dehydrogenase [NAD(P)+] (Thermoplasma acidophilum (strain ATCC 25905 / DSM 1728 / JCM 9062 / NBRC 15155 / AMRC-C165)).